We begin with the raw amino-acid sequence, 123 residues long: Polyadenylate-binding protein-interacting protein 2B (123 aa).

Residue M1 is modified to N-acetylmethionine. Residues 1-13 (MNGSNMANTSPSV) show a composition bias toward polar residues. 2 disordered regions span residues 1–30 (MNGSNMANTSPSVKSKEDQGLSGHDEKENP) and 91–123 (NGLSVSEGHDSEDILSKSNLNPDAKEFIPGEKY). 2 stretches are compositionally biased toward basic and acidic residues: residues 14-30 (KSKEDQGLSGHDEKENP) and 113-123 (DAKEFIPGEKY).

Belongs to the PAIP2 family. In terms of assembly, interacts (via central acidic portion and C-terminus) with PABPC1 (via the second and third RRM domains and the C-terminus). Ubiquitinated in vitro. Expressed in brain, cervix, heart, liver, ovary, kidney, prostate and testis.

Inhibits translation of capped and polyadenylated mRNAs by displacing PABPC1 from the poly(A) tail. This is Polyadenylate-binding protein-interacting protein 2B (PAIP2B) from Homo sapiens (Human).